We begin with the raw amino-acid sequence, 412 residues long: Small ribosomal subunit protein mL103 (rPPR7) (412 aa).

The N-terminal 14 residues, 1–14, are a transit peptide targeting the mitochondrion; it reads MASSRISLRLVRRF. Positions 21–37 are enriched in polar residues; that stretch reads GTTTAPSSGKISVSKAK. The segment at 21–43 is disordered; it reads GTTTAPSSGKISVSKAKSTLRKE. 8 PPR repeats span residues 101 to 135, 136 to 166, 173 to 207, 208 to 242, 243 to 276, 277 to 311, 312 to 346, and 347 to 377; these read EEPFYSTLIRSYGQASMFNHAMRTFEQMDQYGTPR, SAVSFNALLNACLHSKNFDKVPQLFDEIPQR, DKISYGILIKSYCDSGTPEKAIEIMRQMQGKGMEV, TTIAFTTILSSLYKKGELEVADNLWNEMVKKGCEL, DNAAYNVRIMSAQKESPERVKELIEEMSSMGLKP, DTISYNYLMTAYCERGMLDEAKKVYEGLEGNNCAP, NAATFRTLIFHLCYSRLYEQGYAIFKKSVYMHKIP, and DFNTLKHLVVGLVENKKRDDAKGLIRTVKKK.

It belongs to the PPR family. P subfamily. In terms of assembly, component of the mitochondrial ribosome small subunit.

Its subcellular location is the mitochondrion. The protein is Small ribosomal subunit protein mL103 (rPPR7) of Arabidopsis thaliana (Mouse-ear cress).